The following is a 94-amino-acid chain: Small ribosomal subunit protein bS18 (94 aa).

The protein belongs to the bacterial ribosomal protein bS18 family. In terms of assembly, part of the 30S ribosomal subunit. Forms a tight heterodimer with protein bS6.

In terms of biological role, binds as a heterodimer with protein bS6 to the central domain of the 16S rRNA, where it helps stabilize the platform of the 30S subunit. The chain is Small ribosomal subunit protein bS18 from Leptospira biflexa serovar Patoc (strain Patoc 1 / Ames).